Consider the following 265-residue polypeptide: 5'-nucleotidase SurE (265 aa).

4 residues coordinate a divalent metal cation: D11, D12, S43, and N101.

Belongs to the SurE nucleotidase family. It depends on a divalent metal cation as a cofactor.

It is found in the cytoplasm. It carries out the reaction a ribonucleoside 5'-phosphate + H2O = a ribonucleoside + phosphate. Functionally, nucleotidase that shows phosphatase activity on nucleoside 5'-monophosphates. The chain is 5'-nucleotidase SurE from Synechococcus sp. (strain CC9311).